Here is a 126-residue protein sequence, read N- to C-terminus: Glycine cleavage system H protein (126 aa).

The Lipoyl-binding domain occupies 22–104; that stretch reads VAIIGITEYA…YEKAWMVKVE (83 aa). Lys63 bears the N6-lipoyllysine mark.

It belongs to the GcvH family. The glycine cleavage system is composed of four proteins: P, T, L and H. (R)-lipoate serves as cofactor.

In terms of biological role, the glycine cleavage system catalyzes the degradation of glycine. The H protein shuttles the methylamine group of glycine from the P protein to the T protein. Its function is as follows. Is also involved in protein lipoylation via its role as an octanoyl/lipoyl carrier protein intermediate. This chain is Glycine cleavage system H protein, found in Staphylococcus aureus (strain USA300).